The chain runs to 87 residues: MTENEKVTRNVQGRVVSNKADKTITVLVERRVRHPLYGKYIRRSSKMQAHDEGNECQVGDVVTIEQCRPISKSKAWRLVKVLERAAQ.

The protein belongs to the universal ribosomal protein uS17 family. As to quaternary structure, part of the 30S ribosomal subunit.

Its function is as follows. One of the primary rRNA binding proteins, it binds specifically to the 5'-end of 16S ribosomal RNA. The sequence is that of Small ribosomal subunit protein uS17 from Alkalilimnicola ehrlichii (strain ATCC BAA-1101 / DSM 17681 / MLHE-1).